A 227-amino-acid chain; its full sequence is Ion-translocating oxidoreductase complex subunit E (227 aa).

The next 6 helical transmembrane spans lie at 18-38 (ALVQ…VTNA), 39-59 (LGLG…VSLV), 69-89 (IPVF…LMNA), 93-113 (GLYL…IIIG), 125-145 (LPAV…LVLL), and 182-202 (HFLL…LIAL).

This sequence belongs to the NqrDE/RnfAE family. In terms of assembly, the complex is composed of six subunits: RnfA, RnfB, RnfC, RnfD, RnfE and RnfG.

It is found in the cell inner membrane. Functionally, part of a membrane-bound complex that couples electron transfer with translocation of ions across the membrane. This chain is Ion-translocating oxidoreductase complex subunit E, found in Aliivibrio fischeri (strain MJ11) (Vibrio fischeri).